Reading from the N-terminus, the 414-residue chain is Serine hydroxymethyltransferase (414 aa).

(6S)-5,6,7,8-tetrahydrofolate-binding positions include Leu117 and Gly121–Leu123. Lys226 is modified (N6-(pyridoxal phosphate)lysine). Residue Ser349 to Phe351 coordinates (6S)-5,6,7,8-tetrahydrofolate.

This sequence belongs to the SHMT family. As to quaternary structure, homodimer. Requires pyridoxal 5'-phosphate as cofactor.

The protein resides in the cytoplasm. It carries out the reaction (6R)-5,10-methylene-5,6,7,8-tetrahydrofolate + glycine + H2O = (6S)-5,6,7,8-tetrahydrofolate + L-serine. It functions in the pathway one-carbon metabolism; tetrahydrofolate interconversion. It participates in amino-acid biosynthesis; glycine biosynthesis; glycine from L-serine: step 1/1. In terms of biological role, catalyzes the reversible interconversion of serine and glycine with tetrahydrofolate (THF) serving as the one-carbon carrier. Also exhibits THF-independent aldolase activity toward beta-hydroxyamino acids, producing glycine and aldehydes, via a retro-aldol mechanism. The protein is Serine hydroxymethyltransferase of Methanospirillum hungatei JF-1 (strain ATCC 27890 / DSM 864 / NBRC 100397 / JF-1).